The chain runs to 1186 residues: MEVDTEEKRHRTRSKGVRVPVEPAIQELFSCPTPGCDGSGHVSGKYARHRSVYGCPLAKKRKTQDKQPQEPAPKRKPFAVKADSSSVDECDDSDGTEDMDEKEEDEGEEYSEDNDEPGDEDEEDEEGDREEEEEIEEEDEDDDEDGEDVEDEEEEEEEEEEEEEEEENEDHQMNCHNTRIMQDTEKDDNNNDEYDNYDELVAKSLLNLGKIAEDAAYRARTESEMNSNTSNSLEDDSDKNENLGRKSELSLDLDSDVVRETVDSLKLLAQGHGVVLSENMNDRNYADSMSQQDSRNMNYVMLGKPMNNGLMEKMVEESDEEVCLSSLECLRNQCFDLARKLSETNPQERNPQQNMNIRQHVRPEEDFPGRTPDRNYSDMLNLMRLEEQLSPRSRVFASCAKEDGCHERDDDTTSVNSDRSEEVFDMTKGNLTLLEKAIALETERAKAMREKMAMEAGRRDNMRSYEDQSPRQLPGEDRKPKSSDSHVKKPYYGKDPSRTEKKESKCPTPGCDGTGHVTGLYPHHRSLSGCPHKDRVPPEILAMHESVLKCPTPGCTGRGHVNSNRNSHRSLSGCPIAAAEKLAKAQEKHQSCDVSKSSQASDRVLRPMCFVKQLEIPQYGYRNNVPTTTPRSNLAKELEKYSKTSFEYNSYDNHTYGKRAIAPKVQTRDISPKGYDDAKRYCKDPSPSSSSTSSYAPSSSSNLSCGGGSSASSTCSKSSFDYTHDMEAAHMAATAILNLSTRCREMPQNLSTKPQDLCATRNPDMEVDENGTLDLSMNKQRPRDSCCPILTPLEPMSPQQQAVMNNRCFQLGEGDCWDLPVDYTKMKPRRIDEDESKDITPEDLDPFQEALEERRYPGEVTIPSPKPKYPQCKESKKDLITLSGCPLADKSIRSMLATSSQELKCPTPGCDGSGHITGNYASHRSLSGCPRAKKSGIRIAQSKEDKEDQEPIRCPVPGCDGQGHITGKYASHRSASGCPLAAKRQKDGYLNGSQFSWKSVKTEGMSCPTPGCDGSGHVSGSFLTHRSLSGCPRATSAMKKAKLSGEQMLTIKQRASNGIENDEEIKQLDEEIKELNESNSQMEADMIKLRTQITTMESNLKTIEEENKVIEQQNESLLHELANLSQSLIHSLANIQLPHMDPINEQNFDAYVTTLTEMYTNQDRYQSPENKALLENIKQAVRGIQV.

Residues 1-21 are disordered; that stretch reads MEVDTEEKRHRTRSKGVRVPV. The CCHHC-type 1 zinc-finger motif lies at 22–65; sequence EPAIQELFSCPTPGCDGSGHVSGKYARHRSVYGCPLAKKRKTQD. Zn(2+)-binding residues include Cys31, Cys36, His49, and Cys55. Disordered stretches follow at residues 56–175 and 220–247; these read PLAK…QMNC and RTESEMNSNTSNSLEDDSDKNENLGRKS. A compositionally biased stretch (acidic residues) spans 86–169; the sequence is SVDECDDSDG…EEEEEEEENE (84 aa). Ser250 carries the phosphoserine modification. Disordered regions lie at residues 342 to 372 and 449 to 513; these read SETNPQERNPQQNMNIRQHVRPEEDFPGRTP and REKM…GCDG. Over residues 343 to 357 the composition is skewed to polar residues; the sequence is ETNPQERNPQQNMNI. Basic and acidic residues-rich tracts occupy residues 361-372, 449-487, and 495-505; these read VRPEEDFPGRTP, REKMAMEAGRRDNMRSYEDQSPRQLPGEDRKPKSSDSHV, and DPSRTEKKESK. 2 consecutive CCHHC-type zinc fingers follow at residues 497-540 and 541-584; these read SRTE…PPEI and LAMH…KLAK. Positions 506, 511, 524, 530, 550, 555, 568, and 574 each coordinate Zn(2+). 2 disordered regions span residues 659 to 709 and 753 to 780; these read RAIA…GGGS and KPQDLCATRNPDMEVDENGTLDLSMNKQ. Residues 666-683 show a composition bias toward basic and acidic residues; it reads QTRDISPKGYDDAKRYCK. The span at 685 to 709 shows a compositional bias: low complexity; that stretch reads PSPSSSSTSSYAPSSSSNLSCGGGS. 3 consecutive CCHHC-type zinc fingers follow at residues 896–939, 945–988, and 998–1041; these read LATS…GIRI, DKED…QKDG, and KSVK…MKKA. Zn(2+) contacts are provided by Cys905, Cys910, His923, Cys929, Cys954, Cys959, His972, Cys978, Cys1007, Cys1012, His1025, and Cys1031. Positions 1056-1130 form a coiled coil; it reads SNGIENDEEI…LANLSQSLIH (75 aa).

Belongs to the MYT1 family. In terms of assembly, interacts with SIN3B.

It localises to the nucleus. It is found in the chromosome. Functionally, transcription factor that plays a key role in neuronal differentiation by specifically repressing expression of non-neuronal genes during neuron differentiation. In contrast to other transcription repressors that inhibit specific lineages, mediates repression of multiple differentiation programs. Also represses expression of negative regulators of neurogenesis, such as members of the Notch signaling pathway, including HES1. The combination of three transcription factors, ASCL1, POU3F2/BRN2 and MYT1L, is sufficient to reprogram fibroblasts and other somatic cells into induced neuronal (iN) cells in vitro. Directly binds the 5'-AAGTT-3' core motif present on the promoter of target genes and represses transcription by recruiting a multiprotein complex containing SIN3B. The 5'-AAGTT-3' core motif is absent from the promoter of neural genes. The polypeptide is Myelin transcription factor 1-like protein (Homo sapiens (Human)).